The chain runs to 610 residues: UvrABC system protein C (610 aa).

A GIY-YIG domain is found at Ser16–Val94. One can recognise a UVR domain in the interval Asp204–Val239. Residues His540 to Glu559 form a disordered region. Over residues Ser543 to Val552 the composition is skewed to basic residues.

Belongs to the UvrC family. Interacts with UvrB in an incision complex.

Its subcellular location is the cytoplasm. The UvrABC repair system catalyzes the recognition and processing of DNA lesions. UvrC both incises the 5' and 3' sides of the lesion. The N-terminal half is responsible for the 3' incision and the C-terminal half is responsible for the 5' incision. This is UvrABC system protein C from Klebsiella pneumoniae (strain 342).